The chain runs to 110 residues: UPF0145 protein (110 aa).

Belongs to the UPF0145 family.

In Listeria welshimeri, this protein is UPF0145 protein.